The sequence spans 543 residues: CTP synthase (543 aa).

The tract at residues M1 to I265 is amidoligase domain. Residue S13 participates in CTP binding. S13 is a binding site for UTP. S14–L19 contributes to the ATP binding site. Residue Y54 coordinates L-glutamine. D71 is a binding site for ATP. The Mg(2+) site is built by D71 and E139. Residues D146–E148, K186–Q191, and K222 each bind CTP. Residues K186–Q191 and K222 contribute to the UTP site. Residue R238 to V240 coordinates ATP. In terms of domain architecture, Glutamine amidotransferase type-1 spans T291–L542. G353 contacts L-glutamine. Residue C380 is the Nucleophile; for glutamine hydrolysis of the active site. L-glutamine contacts are provided by residues F381–Q384, E404, and R470. Residues H515 and E517 contribute to the active site.

Belongs to the CTP synthase family. In terms of assembly, homotetramer.

It catalyses the reaction UTP + L-glutamine + ATP + H2O = CTP + L-glutamate + ADP + phosphate + 2 H(+). It carries out the reaction L-glutamine + H2O = L-glutamate + NH4(+). The enzyme catalyses UTP + NH4(+) + ATP = CTP + ADP + phosphate + 2 H(+). It functions in the pathway pyrimidine metabolism; CTP biosynthesis via de novo pathway; CTP from UDP: step 2/2. Its activity is regulated as follows. Allosterically activated by GTP, when glutamine is the substrate; GTP has no effect on the reaction when ammonia is the substrate. The allosteric effector GTP functions by stabilizing the protein conformation that binds the tetrahedral intermediate(s) formed during glutamine hydrolysis. Inhibited by the product CTP, via allosteric rather than competitive inhibition. In terms of biological role, catalyzes the ATP-dependent amination of UTP to CTP with either L-glutamine or ammonia as the source of nitrogen. Regulates intracellular CTP levels through interactions with the four ribonucleotide triphosphates. The sequence is that of CTP synthase from Bradyrhizobium diazoefficiens (strain JCM 10833 / BCRC 13528 / IAM 13628 / NBRC 14792 / USDA 110).